The chain runs to 878 residues: Valine--tRNA ligase (878 aa).

The 'HIGH' region signature appears at 45 to 55 (PNVTGQLHMGH). A 'KMSKS' region motif is present at residues 524 to 528 (KMSKS). Residue Lys527 participates in ATP binding. Residues 804–871 (PLKDLIDLEK…REKEVLEQRI (68 aa)) are a coiled coil.

Belongs to the class-I aminoacyl-tRNA synthetase family. ValS type 1 subfamily. As to quaternary structure, monomer.

The protein localises to the cytoplasm. It catalyses the reaction tRNA(Val) + L-valine + ATP = L-valyl-tRNA(Val) + AMP + diphosphate. Functionally, catalyzes the attachment of valine to tRNA(Val). As ValRS can inadvertently accommodate and process structurally similar amino acids such as threonine, to avoid such errors, it has a 'posttransfer' editing activity that hydrolyzes mischarged Thr-tRNA(Val) in a tRNA-dependent manner. In Carboxydothermus hydrogenoformans (strain ATCC BAA-161 / DSM 6008 / Z-2901), this protein is Valine--tRNA ligase.